The chain runs to 271 residues: Putative mitochondrial carrier protein PET8 (271 aa).

3 Solcar repeats span residues 3–76 (STFL…MKQQ), 91–177 (AEVL…LKKK), and 187–270 (VSAW…VHSL). A run of 6 helical transmembrane segments spans residues 6 to 26 (LASL…FFPI), 51 to 71 (GLGS…VTYD), 97 to 117 (MLSS…AEVI), 152 to 168 (GWWT…CIQF), 193 to 213 (AVCG…LDVL), and 251 to 271 (MWIS…HSLF).

Belongs to the mitochondrial carrier (TC 2.A.29) family.

The protein localises to the mitochondrion inner membrane. This chain is Putative mitochondrial carrier protein PET8 (PET8), found in Eremothecium gossypii (strain ATCC 10895 / CBS 109.51 / FGSC 9923 / NRRL Y-1056) (Yeast).